We begin with the raw amino-acid sequence, 425 residues long: Stabilizer of axonemal microtubules 4 (425 aa).

2 disordered regions span residues 259–297 and 315–335; these read RGSD…YQPP and NKEP…SYEQ. The span at 260–272 shows a compositional bias: basic and acidic residues; the sequence is GSDRDTGYSRVSE. Residues 277–290 are compositionally biased toward low complexity; the sequence is PRMPTPSSQPTSMS. Residues 321–332 are compositionally biased toward polar residues; that stretch reads FTLNNPSYVRSS.

Microtubule inner protein component of sperm flagellar doublet microtubules. Interacts with PPP1CA. As to expression, expressed in brain, ovaries and testis. Expressed in the tracheal epithelium and in secondary spermatocytes and spermatids present in the seminiferous tubule. Expressed in ependymal cells lining the ventricular walls of the brain.

Its subcellular location is the cell projection. The protein resides in the cilium. It localises to the cytoplasm. The protein localises to the cytoskeleton. It is found in the flagellum axoneme. This Rattus norvegicus (Rat) protein is Stabilizer of axonemal microtubules 4.